The chain runs to 311 residues: Malate dehydrogenase (311 aa).

Residues 7-13 and Asp34 contribute to the NAD(+) site; that span reads GAAGGIG. Residues Arg81 and Arg87 each coordinate substrate. Residues Asn94 and 117–119 each bind NAD(+); that span reads ITN. Residues Asn119 and Arg153 each contribute to the substrate site. His177 functions as the Proton acceptor in the catalytic mechanism. Met227 contacts NAD(+).

It belongs to the LDH/MDH superfamily. MDH type 1 family. Homodimer.

The catalysed reaction is (S)-malate + NAD(+) = oxaloacetate + NADH + H(+). Its function is as follows. Catalyzes the reversible oxidation of malate to oxaloacetate. The chain is Malate dehydrogenase from Aeromonas hydrophila subsp. hydrophila (strain ATCC 7966 / DSM 30187 / BCRC 13018 / CCUG 14551 / JCM 1027 / KCTC 2358 / NCIMB 9240 / NCTC 8049).